The primary structure comprises 112 residues: Nucleoid-associated protein FTM_1023 (112 aa).

The protein belongs to the YbaB/EbfC family. As to quaternary structure, homodimer.

The protein resides in the cytoplasm. Its subcellular location is the nucleoid. Its function is as follows. Binds to DNA and alters its conformation. May be involved in regulation of gene expression, nucleoid organization and DNA protection. The sequence is that of Nucleoid-associated protein FTM_1023 from Francisella tularensis subsp. mediasiatica (strain FSC147).